A 406-amino-acid chain; its full sequence is Prenyltransferase phqJ (406 aa).

Residues 1–19 (MTVSTESNFPHGASTQKPQ) are compositionally biased toward polar residues. Residues 1–23 (MTVSTESNFPHGASTQKPQSAEP) are disordered. Glu-99 contacts brevianamide F. Dimethylallyl diphosphate-binding residues include Arg-113, Lys-200, and Tyr-202. Tyr-204 is a binding site for brevianamide F. Lys-269, Tyr-271, and Tyr-340 together coordinate dimethylallyl diphosphate.

It belongs to the tryptophan dimethylallyltransferase family.

Its pathway is alkaloid biosynthesis. Functionally, prenyltransferase; part of the gene cluster that mediates the biosynthesis of paraherquamide, a fungal indole alkaloid that belongs to a family of natural products containing a characteristic bicyclo[2.2.2]diazaoctane core. The first steps in the biosynthesis of paraherquamide is the production of the beta-methyl-proline precursor from L-isoleucine. They require oxidation of a terminally hydroxylated L-isoleucine to the corresponding aldehyde by enzymes which have still to be identified. Spontaneous cyclization and dehydration would yield the 4-methyl pyrolline-5-carboxylic acid, which is then reduced by the pyrroline-5-carboxylate reductase phqD leading to the beta-methyl-proline precursor. The next step of paraherquamide biosynthesis involves coupling of beta-methyl-proline and L-tryptophan by the bimodular NRPS phqB, to produce a monooxopiperazine intermediate. The reductase (R) domain of phqB utilizes NADPH for hydride transfer to reduce the thioester bond of the T domain-tethered linear dipeptide to a hemithioaminal intermediate, which spontaneously cleaves the C-S bond to release the aldehyde product. This compound undergoes spontaneous cyclization and dehydration to give a dienamine which is reverse prenylated at C-2 by the reverse prenyltransferase phqJ. The other prenyltransferase present in the cluster, phqI may be a redundant gene in the pathway. During biosynthetic assembly, the key step to produce the polycyclic core is catalyzed by the bifunctional reductase and intramolecular [4+2] Diels-Alderase, phqE, resulting in formation of the [2.2.2] diazaoctane intermediate preparaherquamide. Following formation of preparaherquamide, an indole 2,3-epoxidation-initiated pinacol-like rearrangement is catalyzed by the phqK FAD-dependent monooxygenase. The prenyltransferase phqA, the cytochrome P450 monooxygenase phqL, and the FAD-linked oxidoreductase phqH (or the cytochrome P450 monooxygenase phqM), are proposed to be involved in the formation of the pyran ring. The FAD-dependent monooxygenase phqK is likely responsible for generation of the spiro-oxindole, and the N-methylation is likely mediated by the phqN methyltransferase leading to the isolable natural product paraherquamide F. However, the order of these biosynthetic steps has still to be determined. In late-stage paraherquamide biosynthesis, the third P450 monooxygenase, phqO, is probably responsible for the C-14 hydroxylation, transforming paraherquamide F to paraherquamide G, and paraherquamide E to the final product paraherquamide A. The expansion from the 6-membered ring pyran (in paraherquamides F and G) to the 7-membered dioxepin ring (in paraherquamides A and E) represents a poorly understood but intriguing process that probably involves the 2-oxoglutarate-dependent dioxygenase phqC. Finally, the remaining members of the paraherquamide cluster, including phqI as well as phqM (or phqH), do not have a clearly prescribed role and appear to be redundant. In Penicillium fellutanum, this protein is Prenyltransferase phqJ.